The chain runs to 935 residues: Dual 3',5'-cyclic-AMP and -GMP phosphodiesterase 11A (935 aa).

The segment at 41–125 (RHSSGQGASD…ASQKELRKSF (85 aa)) is disordered. Low complexity predominate over residues 54-69 (ALAGASSLAQSSARGS). S162, S163, and S239 each carry phosphoserine. GAF domains follow at residues 217–370 (DLTS…GIAI) and 402–558 (DLEK…GLGI). S424 serves as a coordination point for 3',5'-cyclic GMP. The 325-residue stretch at 588 to 912 (SKAEVDKFKA…RKWEELHQKR (325 aa)) folds into the PDEase domain. H664 (proton donor) is an active-site residue. The a divalent metal cation site is built by H668, H704, D705, and D816. A disordered region spans residues 915 to 935 (VSAASPVPSSPSPAVAGEDRL).

The protein belongs to the cyclic nucleotide phosphodiesterase family. The cofactor is a divalent metal cation. In terms of tissue distribution, isoform 1 is expressed in brain, heart, kidney and liver, but not in prostate. Isoform 2 is specifically expressed in testis. Isoform 3 is expressed in various tissues including brain, lung, skeletal muscle, spleen, testis and prostate.

The protein localises to the cytoplasm. The protein resides in the cytosol. The catalysed reaction is 3',5'-cyclic GMP + H2O = GMP + H(+). It carries out the reaction 3',5'-cyclic AMP + H2O = AMP + H(+). Inhibited by 3-isobutyl-1-methylxanthine (IBMX), zaprinast and dipyridamole. cGMP acts as an allosteric activator. Functionally, plays a role in signal transduction by regulating the intracellular concentration of cyclic nucleotides cAMP and cGMP. Catalyzes the hydrolysis of both cAMP and cGMP to 5'-AMP and 5'-GMP, respectively. In Rattus norvegicus (Rat), this protein is Dual 3',5'-cyclic-AMP and -GMP phosphodiesterase 11A.